Reading from the N-terminus, the 447-residue chain is Adenylosuccinate synthetase (447 aa).

GTP contacts are provided by residues 12 to 18 and 40 to 42; these read GDEGKGK and GHT. The active-site Proton acceptor is Asp13. Mg(2+)-binding residues include Asp13 and Gly40. IMP is bound by residues 13-16, 38-41, Thr128, Arg142, Gln223, Thr238, and Arg302; these read DEGK and NAGH. His41 acts as the Proton donor in catalysis. 298 to 304 is a substrate binding site; sequence TTTGRKR. GTP contacts are provided by residues Arg304, 330-332, and 412-414; these read KLD and SLG.

The protein belongs to the adenylosuccinate synthetase family. In terms of assembly, homodimer. It depends on Mg(2+) as a cofactor.

The protein localises to the cytoplasm. It catalyses the reaction IMP + L-aspartate + GTP = N(6)-(1,2-dicarboxyethyl)-AMP + GDP + phosphate + 2 H(+). It participates in purine metabolism; AMP biosynthesis via de novo pathway; AMP from IMP: step 1/2. Plays an important role in the de novo pathway of purine nucleotide biosynthesis. Catalyzes the first committed step in the biosynthesis of AMP from IMP. This chain is Adenylosuccinate synthetase, found in Trichormus variabilis (strain ATCC 29413 / PCC 7937) (Anabaena variabilis).